A 148-amino-acid chain; its full sequence is Ubiquitin-conjugating enzyme E2 10 (148 aa).

The region spanning 1 to 147 (MASKRILKEL…ARSWTQKYAM (147 aa)) is the UBC core domain. The active-site Glycyl thioester intermediate is the cysteine 85.

This sequence belongs to the ubiquitin-conjugating enzyme family. Interacts with CHIP and the E3 ubiquitin ligase BB. Associates with the E3 ubiquitin ligase JMJ24. In terms of tissue distribution, ubiquitously expressed with the highest levels in rosette leaves, roots and petals.

It carries out the reaction S-ubiquitinyl-[E1 ubiquitin-activating enzyme]-L-cysteine + [E2 ubiquitin-conjugating enzyme]-L-cysteine = [E1 ubiquitin-activating enzyme]-L-cysteine + S-ubiquitinyl-[E2 ubiquitin-conjugating enzyme]-L-cysteine.. The protein operates within protein modification; protein ubiquitination. Its function is as follows. Accepts the ubiquitin from the E1 complex and catalyzes its covalent attachment to other proteins. Mediates the selective degradation of short-lived and abnormal proteins. This is Ubiquitin-conjugating enzyme E2 10 from Arabidopsis thaliana (Mouse-ear cress).